We begin with the raw amino-acid sequence, 103 residues long: Large ribosomal subunit protein bL21 (103 aa).

Belongs to the bacterial ribosomal protein bL21 family. Part of the 50S ribosomal subunit. Contacts protein L20.

In terms of biological role, this protein binds to 23S rRNA in the presence of protein L20. This Polynucleobacter necessarius subsp. necessarius (strain STIR1) protein is Large ribosomal subunit protein bL21.